The sequence spans 98 residues: uncharacterized protein (98 aa).

The protein belongs to the YciI family. In terms of assembly, homodimer.

This is an uncharacterized protein from Haemophilus influenzae (strain ATCC 51907 / DSM 11121 / KW20 / Rd).